Consider the following 282-residue polypeptide: Bis(5'-nucleosyl)-tetraphosphatase, symmetrical (282 aa).

This sequence belongs to the Ap4A hydrolase family. Monomer.

The enzyme catalyses P(1),P(4)-bis(5'-adenosyl) tetraphosphate + H2O = 2 ADP + 2 H(+). Its function is as follows. Hydrolyzes diadenosine 5',5'''-P1,P4-tetraphosphate to yield ADP. The polypeptide is Bis(5'-nucleosyl)-tetraphosphatase, symmetrical (Escherichia coli O157:H7).